Reading from the N-terminus, the 835-residue chain is Protein translocase subunit SecA (835 aa).

Residues Gln-85, 103–107, and Asp-492 each bind ATP; that span reads GEGKT. The disordered stretch occupies residues 788–807; the sequence is VQGEAVHPSSDGEEAKKKPV. Cys-819, Cys-821, Cys-830, and Cys-831 together coordinate Zn(2+).

This sequence belongs to the SecA family. In terms of assembly, monomer and homodimer. Part of the essential Sec protein translocation apparatus which comprises SecA, SecYEG and auxiliary proteins SecDF. Other proteins may also be involved. Zn(2+) serves as cofactor.

It localises to the cell membrane. The protein resides in the cytoplasm. The enzyme catalyses ATP + H2O + cellular proteinSide 1 = ADP + phosphate + cellular proteinSide 2.. In terms of biological role, part of the Sec protein translocase complex. Interacts with the SecYEG preprotein conducting channel. Has a central role in coupling the hydrolysis of ATP to the transfer of proteins into and across the cell membrane, serving as an ATP-driven molecular motor driving the stepwise translocation of polypeptide chains across the membrane. The polypeptide is Protein translocase subunit SecA (Bacillus cereus (strain ATCC 10987 / NRS 248)).